A 264-amino-acid polypeptide reads, in one-letter code: MTDILEKIVAVKRQEIAAAIARKPLTAMRADAESRVLTRDFVAALRGKIAAGQPAVIAEIKKSSPSKGVLREDFIPADIAQSYAEHGAACLSVLTDLQFFRGCIDYLKQARASCPLPVLRKDFMLDAYQIYESRACGADAVLLIAAILDDAQMKDLEAIARSLDMAVLVEVHDAPELARALQLKTPLIGINNRNLKTFEVSLDTTLTLMRELPADRLLVCESGIHTRDDVLRMGAAGVNAFLVGEAFMRAPDPGLALAELFATA.

This sequence belongs to the TrpC family.

It catalyses the reaction 1-(2-carboxyphenylamino)-1-deoxy-D-ribulose 5-phosphate + H(+) = (1S,2R)-1-C-(indol-3-yl)glycerol 3-phosphate + CO2 + H2O. The protein operates within amino-acid biosynthesis; L-tryptophan biosynthesis; L-tryptophan from chorismate: step 4/5. In Albidiferax ferrireducens (strain ATCC BAA-621 / DSM 15236 / T118) (Rhodoferax ferrireducens), this protein is Indole-3-glycerol phosphate synthase.